A 472-amino-acid chain; its full sequence is Divinyl ether synthase CYP74 (472 aa).

Cysteine 425 provides a ligand contact to heme.

This sequence belongs to the cytochrome P450 family. Requires heme as cofactor. In terms of tissue distribution, expressed mainly in bulbs, and at lower levels in roots.

The enzyme catalyses (13S)-hydroperoxy-(9Z,11E)-octadecadienoate = etheroleate + H2O. It catalyses the reaction (13S)-hydroperoxy-(9Z,11E,15Z)-octadecatrienoate = etherolenate + H2O. The catalysed reaction is (9S)-hydroperoxy-(10E,12Z)-octadecadienoate = colneleate + H2O. It carries out the reaction (9S)-hydroperoxy-(10E,12Z,15Z)-octadecatrienoate = colnelenate + H2O. The protein operates within lipid metabolism; oxylipin biosynthesis. In terms of biological role, divinyl ether synthase involved in oxylipin biosynthesis. Catalyzes the conversion of (13S)-hydroperoxy-(9Z,11E)-octadecadienoate (13-HPOD) to etheroleate and (13S)-hydroperoxy-(9Z,11E,15Z)-octadecatrienoate (13-HPOT) to etherolenate. Catalyzes the conversion of (9S)-hydroperoxy-(10E,12Z)-octadecadienoate (9-HPOD) to colneleate and (9S)-hydroperoxy-(10E,12Z,15Z)-octadecatrienoate (9-HPOT) colnelenate. This Allium sativum (Garlic) protein is Divinyl ether synthase CYP74.